Here is a 358-residue protein sequence, read N- to C-terminus: Neutral protease 2 homolog PADG_00776 (358 aa).

Positions 1 to 19 (MRRVSGILAVAAFTISAFA) are cleaved as a signal peptide. The propeptide occupies 20 to 185 (GVIQPVAKDA…MNQFVKIAKL (166 aa)). 2 disulfide bridges follow: cysteine 188-cysteine 259 and cysteine 266-cysteine 284. Asparagine 249 is a glycosylation site (N-linked (GlcNAc...) asparagine). Histidine 309 lines the Zn(2+) pocket. The active site involves glutamate 310. Zn(2+)-binding residues include histidine 313 and aspartate 324.

It belongs to the peptidase M35 family. It depends on Zn(2+) as a cofactor.

The protein localises to the secreted. It carries out the reaction Preferential cleavage of bonds with hydrophobic residues in P1'. Also 3-Asn-|-Gln-4 and 8-Gly-|-Ser-9 bonds in insulin B chain.. Secreted metalloproteinase that allows assimilation of proteinaceous substrates. Shows high activities on basic nuclear substrates such as histone and protamine. This chain is Neutral protease 2 homolog PADG_00776, found in Paracoccidioides brasiliensis (strain Pb18).